An 848-amino-acid chain; its full sequence is Dolabradiene synthase KSL4, chloroplastic (848 aa).

Residues 1–64 constitute a chloroplast transit peptide; that stretch reads MASLSFASSH…SRMPRNVDTH (64 aa). Residues 148–168 are disordered; sequence QRSDGSWGPDGGSGDHPSSPL. The Mg(2+) site is built by Asp-597, Asp-601, Asn-742, Ser-746, and Glu-750. A DDXXD motif motif is present at residues 597–601; it reads DDLFD.

This sequence belongs to the terpene synthase family. It depends on Mg(2+) as a cofactor.

Its subcellular location is the plastid. The protein localises to the chloroplast. It carries out the reaction ent-copalyl diphosphate = dolabradiene + diphosphate. Its function is as follows. Involved in the production of antifungal dolabralexin phytoalexins in response to biotic and abiotic stresses. In response to fungal infection and in associtation with AN2, is involved in the production dolabradiene, a type of antifungal phytoalexin. Converts ent-copalyl disphosphate (ent-CPP) to dolabradiene. The chain is Dolabradiene synthase KSL4, chloroplastic from Zea mays (Maize).